The chain runs to 103 residues: MYAVIVTGGKQYKVAPGEYLKIEKLEIATGESVTFDRVLLVGNGDDVNIGAPVVAGATVVAEVVSQGRHDKVRIIKFRRRKHHMKRMGHRQWYTEIKITGIQA.

Belongs to the bacterial ribosomal protein bL21 family. In terms of assembly, part of the 50S ribosomal subunit. Contacts protein L20.

In terms of biological role, this protein binds to 23S rRNA in the presence of protein L20. This is Large ribosomal subunit protein bL21 from Pseudomonas syringae pv. syringae (strain B728a).